The sequence spans 4763 residues: Nonribosomal peptide synthetase sidC (4763 aa).

The segment at methionine 1–serine 24 is disordered. Over residues proline 15–serine 24 the composition is skewed to polar residues. Residues serine 296–isoleucine 815 form an adenylation 1 region. One can recognise a Carrier 1 domain in the interval glutamate 853–lysine 930. Position 890 is an O-(pantetheine 4'-phosphoryl)serine (serine 890). The condensation 1 stretch occupies residues threonine 1003–proline 1396. Residues glycine 1398–alanine 1951 form an adenylation 2 region. The Carrier 2 domain maps to leucine 1979–serine 2055. Serine 2016 bears the O-(pantetheine 4'-phosphoryl)serine mark. The interval threonine 2092–methionine 2423 is condensation 2. An adenylation 3 region spans residues glutamate 2556–leucine 3070. The Carrier 3 domain occupies arginine 3099–threonine 3175. O-(pantetheine 4'-phosphoryl)serine is present on serine 3136. Positions proline 3217–leucine 3626 are condensation 3. Residues serine 3647 to serine 3720 enclose the Carrier 4 domain. Residue serine 3681 is modified to O-(pantetheine 4'-phosphoryl)serine. A condensation 4 region spans residues threonine 3761–glutamine 4093. The Carrier 5 domain occupies proline 4204 to valine 4277. Serine 4238 carries the post-translational modification O-(pantetheine 4'-phosphoryl)serine. Residues glutamate 4344–phenylalanine 4593 are condensation 5.

This sequence belongs to the NRP synthetase family.

The protein operates within siderophore biosynthesis. Its function is as follows. Nonribosomal peptide synthase; part of the siderophore biosynthetic pathway. Aspergillus fumigatus produces four types of siderophores, low-molecular-mass iron chelators, including excreted fusarinine C (FsC) and triacetylfusarinine C (TAFC) for iron uptake; and intacellular ferricrocin (FC) for hyphal and hydroxyferricrocin (HFC) for conidial iron distribution and storage. TAFC consists of three N(2)-acetyl-N(5)-anhydromevalonyl-N(5)-hydroxyornithine residues cyclically linked by ester bonds; FC is a cyclic hexapeptide with the structure Gly-Ser-Gly-(N(5)-acetyl-N(5)-hydroxyornithine)x3. The biosynthesis of all four siderophores depends on the hydroxylation of ornithine, catalyzed by the monooxygenase sidA. Subsequently, the pathways for biosynthesis of extra- and intracellular siderophores split. For biosynthesis of extracellular siderophores, the transacylase sidF transfers anhydromevalonyl to N(5)-hydroxyornithine. The required anhydromevalonyl-CoA moiety is derived from mevalonate by CoA ligation and dehydration catalyzed by sidI and sidH respectively. The acetylation of N(5)-hydroxyornithine for FC biosynthesis involves the constitutively expressed sidL. FC is hydroxylated to HFC by an as yet uncharacterized enzyme during conidiation. Assembly of fusarinine C (FsC) and FC is catalyzed by two different nonribosomal peptide synthetases (NRPS), sidD and sidC respectively. Subsequently, sidG catalyzes N2-acetylation of FsC for forming TAFC. Both extra- and intracellular siderophores are crucial for growth during iron limitation and virulence. This Aspergillus fumigatus (strain ATCC MYA-4609 / CBS 101355 / FGSC A1100 / Af293) (Neosartorya fumigata) protein is Nonribosomal peptide synthetase sidC.